We begin with the raw amino-acid sequence, 194 residues long: ATP-dependent Clp protease proteolytic subunit 1 (194 aa).

Catalysis depends on Ser-98, which acts as the Nucleophile. Residue His-123 is part of the active site.

The protein belongs to the peptidase S14 family. Fourteen ClpP subunits assemble into 2 heptameric rings which stack back to back to give a disk-like structure with a central cavity, resembling the structure of eukaryotic proteasomes.

Its subcellular location is the cytoplasm. It catalyses the reaction Hydrolysis of proteins to small peptides in the presence of ATP and magnesium. alpha-casein is the usual test substrate. In the absence of ATP, only oligopeptides shorter than five residues are hydrolyzed (such as succinyl-Leu-Tyr-|-NHMec, and Leu-Tyr-Leu-|-Tyr-Trp, in which cleavage of the -Tyr-|-Leu- and -Tyr-|-Trp bonds also occurs).. Functionally, cleaves peptides in various proteins in a process that requires ATP hydrolysis. Has a chymotrypsin-like activity. Plays a major role in the degradation of misfolded proteins. ClpXP1 is involved in the complete degradation of the Site-2 clipped anti-sigma-W factor RsiW. This results in the release of SigW and the transcription activation of the genes under the control of the sigma-W factor. The polypeptide is ATP-dependent Clp protease proteolytic subunit 1 (Halalkalibacterium halodurans (strain ATCC BAA-125 / DSM 18197 / FERM 7344 / JCM 9153 / C-125) (Bacillus halodurans)).